We begin with the raw amino-acid sequence, 165 residues long: Type 3 secretion system regulator YopR (165 aa).

Belongs to the YopR family.

It localises to the secreted. Its function is as follows. May be involved in the regulation of the assembly of the type III secretion system (T3SS), also called injectisome, which is used to inject bacterial effector proteins into eukaryotic host cells. May control the secretion and/or polymerization of YscF/SctF, the principal component of the needle filament, thereby impacting the assembly of the T3SS. Involved in pathogenesis. In Yersinia pestis, this protein is Type 3 secretion system regulator YopR.